The following is a 318-amino-acid chain: Ribosomal RNA small subunit methyltransferase A (318 aa).

Positions 40, 42, 67, 88, 118, and 137 each coordinate S-adenosyl-L-methionine. Positions A296–G305 are enriched in basic and acidic residues. The disordered stretch occupies residues A296–C318.

The protein belongs to the class I-like SAM-binding methyltransferase superfamily. rRNA adenine N(6)-methyltransferase family. RsmA subfamily.

The protein localises to the cytoplasm. The catalysed reaction is adenosine(1518)/adenosine(1519) in 16S rRNA + 4 S-adenosyl-L-methionine = N(6)-dimethyladenosine(1518)/N(6)-dimethyladenosine(1519) in 16S rRNA + 4 S-adenosyl-L-homocysteine + 4 H(+). In terms of biological role, specifically dimethylates two adjacent adenosines (A1518 and A1519) in the loop of a conserved hairpin near the 3'-end of 16S rRNA in the 30S particle. May play a critical role in biogenesis of 30S subunits. This chain is Ribosomal RNA small subunit methyltransferase A, found in Mycobacterium avium (strain 104).